A 488-amino-acid polypeptide reads, in one-letter code: Ribulose bisphosphate carboxylase large chain (488 aa).

Substrate contacts are provided by Asn127 and Thr177. Residue Lys179 is the Proton acceptor of the active site. Residue Lys181 coordinates substrate. The Mg(2+) site is built by Lys205, Asp207, and Glu208. Position 205 is an N6-carboxylysine (Lys205). The active-site Proton acceptor is the His297. Positions 298, 330, and 382 each coordinate substrate.

Belongs to the RuBisCO large chain family. Type I subfamily. Heterohexadecamer of 8 large chains and 8 small chains. Mg(2+) is required as a cofactor.

It is found in the plastid. The protein localises to the chloroplast. The catalysed reaction is 2 (2R)-3-phosphoglycerate + 2 H(+) = D-ribulose 1,5-bisphosphate + CO2 + H2O. The enzyme catalyses D-ribulose 1,5-bisphosphate + O2 = 2-phosphoglycolate + (2R)-3-phosphoglycerate + 2 H(+). Its function is as follows. RuBisCO catalyzes two reactions: the carboxylation of D-ribulose 1,5-bisphosphate, the primary event in carbon dioxide fixation, as well as the oxidative fragmentation of the pentose substrate in the photorespiration process. Both reactions occur simultaneously and in competition at the same active site. The polypeptide is Ribulose bisphosphate carboxylase large chain (rbcL) (Porphyra umbilicalis (Purple laver)).